We begin with the raw amino-acid sequence, 133 residues long: Large ribosomal subunit protein eL32z (133 aa).

This sequence belongs to the eukaryotic ribosomal protein eL32 family.

This chain is Large ribosomal subunit protein eL32z (RPL32A), found in Arabidopsis thaliana (Mouse-ear cress).